A 295-amino-acid polypeptide reads, in one-letter code: CRISPR-associated endonuclease Cas1 2 (295 aa).

Mn(2+) contacts are provided by glutamate 155, histidine 215, and glutamate 230.

Belongs to the CRISPR-associated endonuclease Cas1 family. As to quaternary structure, homodimer, forms a heterotetramer with a Cas2 homodimer. It depends on Mg(2+) as a cofactor. Mn(2+) serves as cofactor.

Its function is as follows. CRISPR (clustered regularly interspaced short palindromic repeat), is an adaptive immune system that provides protection against mobile genetic elements (viruses, transposable elements and conjugative plasmids). CRISPR clusters contain spacers, sequences complementary to antecedent mobile elements, and target invading nucleic acids. CRISPR clusters are transcribed and processed into CRISPR RNA (crRNA). Acts as a dsDNA endonuclease. Involved in the integration of spacer DNA into the CRISPR cassette. The polypeptide is CRISPR-associated endonuclease Cas1 2 (Pyrobaculum aerophilum (strain ATCC 51768 / DSM 7523 / JCM 9630 / CIP 104966 / NBRC 100827 / IM2)).